A 793-amino-acid polypeptide reads, in one-letter code: DnaJ homolog subfamily C member 10 (793 aa).

An N-terminal signal peptide occupies residues 1-32 (MGVWLSKDDYIRDLKRIILCFLIVYMAILVGT). The J domain maps to 35–100 (DFYSLLGVSK…DLRKKYDKYG (66 aa)). Residues 130–232 (EIITLERREF…ESLVSFAMQH (103 aa)) enclose the Thioredoxin 1 domain. Cysteine 158 and cysteine 161 are joined by a disulfide. Trxb stretches follow at residues 235–350 (STVT…LPDF) and 348–463 (PDFE…PQNF). Thioredoxin domains are found at residues 454–553 (HVTT…IEDL), 557–662 (SVVS…SLRI), and 671–778 (VSTG…INEK). Cysteine 480 and cysteine 483 are joined by a disulfide. Asparagine 530 is a glycosylation site (N-linked (GlcNAc...) asparagine). 2 disulfides stabilise this stretch: cysteine 588/cysteine 591 and cysteine 700/cysteine 703. Residues 790–793 (KDEL) carry the Prevents secretion from ER motif.

Interacts with HSPA5 (via its J domain). Interacts with EDEM1.

Its subcellular location is the endoplasmic reticulum lumen. Endoplasmic reticulum disulfide reductase involved both in the correct folding of proteins and degradation of misfolded proteins. Required for efficient folding of proteins in the endoplasmic reticulum by catalyzing the removal of non-native disulfide bonds formed during the folding of proteins, such as LDLR. Also involved in endoplasmic reticulum-associated degradation (ERAD) by reducing incorrect disulfide bonds in misfolded glycoproteins recognized by EDEM1. Interaction with HSPA5 is required its activity, not for the disulfide reductase activity, but to facilitate the release of DNAJC10 from its substrate. Promotes apoptotic signaling pathway in response to endoplasmic reticulum stress. This chain is DnaJ homolog subfamily C member 10 (DNAJC10), found in Pongo abelii (Sumatran orangutan).